We begin with the raw amino-acid sequence, 338 residues long: 1-aminocyclopropane-1-carboxylate deaminase (338 aa).

At Lys51 the chain carries N6-(pyridoxal phosphate)lysine. Residue Ser78 is the Nucleophile of the active site.

This sequence belongs to the ACC deaminase/D-cysteine desulfhydrase family. Homotrimer. Pyridoxal 5'-phosphate is required as a cofactor.

It carries out the reaction 1-aminocyclopropane-1-carboxylate + H2O = 2-oxobutanoate + NH4(+). Functionally, catalyzes a cyclopropane ring-opening reaction, the irreversible conversion of 1-aminocyclopropane-1-carboxylate (ACC) to ammonia and alpha-ketobutyrate. Allows growth on ACC as a nitrogen source. In Burkholderia cenocepacia (strain ATCC BAA-245 / DSM 16553 / LMG 16656 / NCTC 13227 / J2315 / CF5610) (Burkholderia cepacia (strain J2315)), this protein is 1-aminocyclopropane-1-carboxylate deaminase.